Here is a 195-residue protein sequence, read N- to C-terminus: HTH-type transcriptional regulator BetI (195 aa).

One can recognise an HTH tetR-type domain in the interval 8 to 68 (PIRRQQLIEA…ATMRYLISHL (61 aa)). A DNA-binding region (H-T-H motif) is located at residues 31–50 (SIVQIARRAGVSNGIISHYF).

It participates in amine and polyamine biosynthesis; betaine biosynthesis via choline pathway [regulation]. In terms of biological role, repressor involved in the biosynthesis of the osmoprotectant glycine betaine. It represses transcription of the choline transporter BetT and the genes of BetAB involved in the synthesis of glycine betaine. The polypeptide is HTH-type transcriptional regulator BetI (Pectobacterium atrosepticum (strain SCRI 1043 / ATCC BAA-672) (Erwinia carotovora subsp. atroseptica)).